Consider the following 106-residue polypeptide: Small cardioactive peptide-related peptide (106 aa).

The signal sequence occupies residues 1 to 20; that stretch reads MFCKHLSFVAITICFLLVLA. The propeptide at 21–41 is amino-terminal spacer peptide; sequence KTENEIQQKNIKFDQRTWRNM. Glutamine amide is present on Gln52. The propeptide at 55 to 106 is carboxy-terminal spacer peptide; that stretch reads SDNQPDYTCCGMPLTKYVGICPIGMECCPGLKKVLQKSGQRTIYSVCVADAY.

Expression is seen in the peripheral and central nervous systems in tissues such as the brain, the inferior buccal ganglion, the gastric ganglion, the olfactory lobe, the peduncle lobe and the optic lobe. Expression in the brain is distributed in the median inferior frontal lobe, the superior buccal lobe, the prebranchial lobe and the pedal lobe. Not expressed in the vasomotor lobe or the palliovisceral lobe that controls the cardiac system.

It localises to the secreted. Evokes contractions in the radula protractor muscle, and may regulate feeding behavior and gut motility by controlling muscle contraction of the buccal mass. The protein is Small cardioactive peptide-related peptide of Octopus vulgaris (Common octopus).